Reading from the N-terminus, the 139-residue chain is Small ribosomal subunit protein uS11A (139 aa).

Residues D119–L139 form a disordered region. Basic residues predominate over residues R130 to L139.

It belongs to the universal ribosomal protein uS11 family. In terms of assembly, component of the small ribosomal subunit (SSU). Mature yeast ribosomes consist of a small (40S) and a large (60S) subunit. The 40S small subunit contains 1 molecule of ribosomal RNA (18S rRNA) and at least 33 different proteins. The large 60S subunit contains 3 rRNA molecules (25S, 5.8S and 5S rRNA) and at least 46 different proteins. uS11 interacts with eS1 forming part of the mRNA exit tunnel. uS11 interacts with snoRNA U3. uS11 interacts with MPP10. Component of the ribosomal small subunit (SSU) processome composed of at least 40 protein subunits and snoRNA U3.

The protein localises to the cytoplasm. The protein resides in the nucleus. It is found in the nucleolus. In terms of biological role, component of the ribosome, a large ribonucleoprotein complex responsible for the synthesis of proteins in the cell. The small ribosomal subunit (SSU) binds messenger RNAs (mRNAs) and translates the encoded message by selecting cognate aminoacyl-transfer RNA (tRNA) molecules. The large subunit (LSU) contains the ribosomal catalytic site termed the peptidyl transferase center (PTC), which catalyzes the formation of peptide bonds, thereby polymerizing the amino acids delivered by tRNAs into a polypeptide chain. The nascent polypeptides leave the ribosome through a tunnel in the LSU and interact with protein factors that function in enzymatic processing, targeting, and the membrane insertion of nascent chains at the exit of the ribosomal tunnel. uS11 is involved in nucleolar processing of pre-18S ribosomal RNA and ribosome assembly. This is Small ribosomal subunit protein uS11A (rps1401) from Schizosaccharomyces pombe (strain 972 / ATCC 24843) (Fission yeast).